Consider the following 1426-residue polypeptide: A disintegrin and metalloproteinase with thrombospondin motifs 13 (1426 aa).

An N-terminal signal peptide occupies residues 1-33 (MSQLCLWLTCQPCYAVSVRGILTGAIFILGCWG). The propeptide occupies 34–76 (LSDFQKSLLQDLEPKDVSSYFGHHAAPFTGHPPSHLQRLRRRR). In terms of domain architecture, Peptidase M12B spans 74-291 (RRRTLEDILH…GQMHCFQDPP (218 aa)). E85 contributes to the Ca(2+) binding site. Residues N144 and N148 are each glycosylated (N-linked (GlcNAc...) asparagine). 3 disulfide bridges follow: C157/C210, C204/C286, and C246/C270. The Ca(2+) site is built by D175, D184, E186, D189, and E214. H226 is a Zn(2+) binding site. The active site involves E227. Positions 230 and 236 each coordinate Zn(2+). T281 and D289 together coordinate Ca(2+). The region spanning 295–388 (SGLTRHQLMA…LAELAPVAAV (94 aa)) is the Disintegrin domain. 11 cysteine pairs are disulfide-bonded: C316-C342, C327-C352, C337-C371, C365-C376, C401-C438, C405-C443, C416-C428, C488-C527, C513-C532, C537-C553, and C550-C560. Positions 389-444 (HGHWSSWGPHSPCSRSCGGGVITRRRWCNNPRPAFGGRACVGEDLQAKMCNTQACE) constitute a TSP type-1 1 domain. The interval 445–561 (KTQLEFMSEQ…VCGGDNSTCS (117 aa)) is cysteine-rich. The short motif at 503-505 (RGD) is the Cell attachment site element. The interval 556-685 (DNSTCSSRNG…PDITFSYFQL (130 aa)) is spacer. N-linked (GlcNAc...) asparagine glycans are attached at residues N557, N564, N584, and N619. TSP type-1 domains follow at residues 687-746 (QQAA…VSAP), 747-810 (CSPY…QPCP), 808-871 (PCPT…SLCS), 904-957 (WTPL…RARP), 958-1019 (CPAR…EPCP), 1020-1078 (ARWK…IADC), and 1079-1137 (AFRW…GPCA). O-linked (Fuc...) serine glycosylation is found at S703 and S762. The N-linked (GlcNAc...) asparagine glycan is linked to N834. S914 is a glycosylation site (O-linked (Fuc...) serine). T973 carries an O-linked (Fuc...) threonine glycan. S1033 is a glycosylation site (O-linked (Fuc...) serine). N-linked (GlcNAc...) asparagine glycosylation occurs at N1057. An O-linked (Fuc...) serine glycan is attached at S1093. 2 CUB domains span residues 1195 to 1302 (ACGR…FYKE) and 1293 to 1426 (QPAP…LALS).

Zn(2+) is required as a cofactor. Ca(2+) serves as cofactor. In terms of processing, the precursor is processed by a furin endopeptidase which cleaves off the pro-domain. O-glycosylated. O-fucosylated by POFUT2 on a serine or a threonine residue found within the consensus sequence C1-X(2)-(S/T)-C2-G of the TSP type-1 repeat domains where C1 and C2 are the first and second cysteine residue of the repeat, respectively. Fucosylated repeats can then be further glycosylated by the addition of a beta-1,3-glucose residue by the glucosyltransferase, B3GALTL. Fucosylation mediates the efficient secretion of ADAMTS13. May also be C-glycosylated on tryptophan residues within the consensus sequence W-X-X-W of the TPRs, and also N-glycosylated. These other glycosylations can also facilitate secretion. As to expression, plasma. Expression is consistently high in liver, medium in lung and spleen, low in skeletal muscle and undetectable in heart, brain, kidney and testis.

Its subcellular location is the secreted. It carries out the reaction The enzyme cleaves the von Willebrand factor at bond 842-Tyr-|-Met-843 within the A2 domain.. With respect to regulation, zinc and calcium ions cooperatively modulate enzyme activity. The cleavage of the pro-domain is not required for protease activity. Dependence on calcium for proteolytic activity is mediated by the high affinity site. Its function is as follows. Cleaves the vWF multimers in plasma into smaller forms thereby controlling vWF-mediated platelet thrombus formation. This is A disintegrin and metalloproteinase with thrombospondin motifs 13 (Adamts13) from Mus musculus (Mouse).